Here is a 334-residue protein sequence, read N- to C-terminus: MIEADRLIAPISNHFKDEEVIDRAIRPKKLADYQGQDHVRDQMEIFIQAAQMRQEALDHLLIFGPPGLGKTTLANIVANEMGVNIRTTSGPVLEKAGDLAALLTNLEENDVLFIDEIHRLSPMVEEVLYPAMEDYQLDIMIGEGPAARSIKIDLPPFTLIGATTRAGSLTSPLRDRFGIVQRLEYYKVADLQHIVQRSAQCLGLSMDSEGALEVARRARGTPRIVNRLLRRVRDYAEVKGDGHICAQTADRALNMLDVDHQGFDYMDRKLLLAIMEKFSGGPVGIDNLAAAIGEEKDTIEDVLEPFLIQQGYLQRTPRGRIATDRAYLHFGIEK.

The large ATPase domain (RuvB-L) stretch occupies residues 4–186 (ADRLIAPISN…FGIVQRLEYY (183 aa)). ATP contacts are provided by residues I25, R26, G67, K70, T71, T72, 133–135 (EDY), R176, Y186, and R223. T71 serves as a coordination point for Mg(2+). The small ATPAse domain (RuvB-S) stretch occupies residues 187–257 (KVADLQHIVQ…TADRALNMLD (71 aa)). Residues 260–334 (HQGFDYMDRK…RAYLHFGIEK (75 aa)) form a head domain (RuvB-H) region. DNA-binding residues include R315 and R320.

It belongs to the RuvB family. As to quaternary structure, homohexamer. Forms an RuvA(8)-RuvB(12)-Holliday junction (HJ) complex. HJ DNA is sandwiched between 2 RuvA tetramers; dsDNA enters through RuvA and exits via RuvB. An RuvB hexamer assembles on each DNA strand where it exits the tetramer. Each RuvB hexamer is contacted by two RuvA subunits (via domain III) on 2 adjacent RuvB subunits; this complex drives branch migration. In the full resolvosome a probable DNA-RuvA(4)-RuvB(12)-RuvC(2) complex forms which resolves the HJ.

It localises to the cytoplasm. It carries out the reaction ATP + H2O = ADP + phosphate + H(+). Its function is as follows. The RuvA-RuvB-RuvC complex processes Holliday junction (HJ) DNA during genetic recombination and DNA repair, while the RuvA-RuvB complex plays an important role in the rescue of blocked DNA replication forks via replication fork reversal (RFR). RuvA specifically binds to HJ cruciform DNA, conferring on it an open structure. The RuvB hexamer acts as an ATP-dependent pump, pulling dsDNA into and through the RuvAB complex. RuvB forms 2 homohexamers on either side of HJ DNA bound by 1 or 2 RuvA tetramers; 4 subunits per hexamer contact DNA at a time. Coordinated motions by a converter formed by DNA-disengaged RuvB subunits stimulates ATP hydrolysis and nucleotide exchange. Immobilization of the converter enables RuvB to convert the ATP-contained energy into a lever motion, pulling 2 nucleotides of DNA out of the RuvA tetramer per ATP hydrolyzed, thus driving DNA branch migration. The RuvB motors rotate together with the DNA substrate, which together with the progressing nucleotide cycle form the mechanistic basis for DNA recombination by continuous HJ branch migration. Branch migration allows RuvC to scan DNA until it finds its consensus sequence, where it cleaves and resolves cruciform DNA. This chain is Holliday junction branch migration complex subunit RuvB, found in Vibrio cholerae serotype O1 (strain ATCC 39541 / Classical Ogawa 395 / O395).